We begin with the raw amino-acid sequence, 591 residues long: Speriolin (591 aa).

A coiled-coil region spans residues 1–42 (MSLLTNYEGLRHQIERLVRENEELKKLVRLIRENHELKSAIK). The segment at 1–78 (MSLLTNYEGL…NNGVFLPPSP (78 aa)) is necessary for targeting centrosomes. The segment covering 302–314 (NTSDTQAQPSAAQ) has biased composition (polar residues). 2 disordered regions span residues 302–331 (NTSD…TSPT) and 346–435 (ATSY…ENPR). The segment covering 317–331 (VVPASVPTSPTTSPT) has biased composition (low complexity). Polar residues-rich tracts occupy residues 346 to 357 (ATSYTPSSTTHI) and 390 to 401 (PRTSSSPASVND).

The protein belongs to the speriolin family. As to quaternary structure, found in a complex with CDC20, CDC27 and TUBG1. Interacts with CDC20. In terms of tissue distribution, detected only in testis.

The protein resides in the cytoplasm. The protein localises to the cytoskeleton. Its subcellular location is the microtubule organizing center. It is found in the centrosome. The sequence is that of Speriolin (SPATC1) from Homo sapiens (Human).